Consider the following 511-residue polypeptide: Glucose-6-phosphate 1-dehydrogenase, cytoplasmic isoform (511 aa).

NADP(+) contacts are provided by residues 36–43, arginine 71, tyrosine 151, and lysine 178; that span reads GASGDLAK. Residues lysine 178, 208-212, glutamate 246, and aspartate 265 contribute to the D-glucose 6-phosphate site; that span reads HYLGK. Histidine 270 serves as the catalytic Proton acceptor. Lysine 353 is an NADP(+) binding site. The D-glucose 6-phosphate site is built by lysine 356 and arginine 361. Residues lysine 362, arginine 366, and arginine 390 each contribute to the NADP(+) site. Glutamine 392 is a binding site for D-glucose 6-phosphate. Residues 398–400, 418–420, arginine 484, and tryptophan 506 contribute to the NADP(+) site; these read YMK and DLS.

This sequence belongs to the glucose-6-phosphate dehydrogenase family. In terms of assembly, homotetramer. In terms of tissue distribution, found in tubers, stolons, roots, and flower buds.

Its subcellular location is the cytoplasm. It carries out the reaction D-glucose 6-phosphate + NADP(+) = 6-phospho-D-glucono-1,5-lactone + NADPH + H(+). It functions in the pathway carbohydrate degradation; pentose phosphate pathway; D-ribulose 5-phosphate from D-glucose 6-phosphate (oxidative stage): step 1/3. With respect to regulation, regulated by metabolites. Functionally, catalyzes the rate-limiting step of the oxidative pentose-phosphate pathway, which represents a route for the dissimilation of carbohydrates besides glycolysis. The main function of this enzyme is to generate NADPH for reductive biosyntheses. In Solanum tuberosum (Potato), this protein is Glucose-6-phosphate 1-dehydrogenase, cytoplasmic isoform (G6PDH).